We begin with the raw amino-acid sequence, 168 residues long: Dihydrofolate reductase (168 aa).

One can recognise a DHFR domain in the interval 1 to 159; sequence MISFIFAMDA…YDYEFLMYEK (159 aa). 5–7 contributes to the substrate binding site; sequence IFA. NADP(+) contacts are provided by residues 6-7 and 14-19; these read FA and IGKDND. A substrate-binding site is contributed by D27. Residue 43–46 participates in NADP(+) binding; that stretch reads GRKT. R57 provides a ligand contact to substrate. NADP(+)-binding positions include 62–65 and 95–100; these read VTSA and IGGAQL. Substrate is bound at residue T114.

Belongs to the dihydrofolate reductase family.

It carries out the reaction (6S)-5,6,7,8-tetrahydrofolate + NADP(+) = 7,8-dihydrofolate + NADPH + H(+). The protein operates within cofactor biosynthesis; tetrahydrofolate biosynthesis; 5,6,7,8-tetrahydrofolate from 7,8-dihydrofolate: step 1/1. In terms of biological role, key enzyme in folate metabolism. Catalyzes an essential reaction for de novo glycine and purine synthesis, and for DNA precursor synthesis. This Bacillus subtilis (strain 168) protein is Dihydrofolate reductase (dfrA).